The primary structure comprises 496 residues: Geranylhydroquinone 3''-hydroxylase CYP76B74 (496 aa).

Residues 3–23 form a helical membrane-spanning segment; that stretch reads YTTILVGFLIGFVLFKALTRK. Cysteine 436 provides a ligand contact to heme.

This sequence belongs to the cytochrome P450 family. Requires heme as cofactor.

It is found in the endoplasmic reticulum membrane. The catalysed reaction is (2E)-geranylhydroquinone + reduced [NADPH--hemoprotein reductase] + O2 = (2Z)-3''-hydroxygeranylhydroquinone + oxidized [NADPH--hemoprotein reductase] + H2O + H(+). Its function is as follows. Hydroxylase involved in the biosynthesis pathway of the red naphthoquinone pigment shikonin. Catalyzes the key step C-3''-hydroxylation of the prenylated phenolic intermediate geranylhydroquinone to form 3''-hydroxygeranylhydroquinone. The sequence is that of Geranylhydroquinone 3''-hydroxylase CYP76B74 from Arnebia euchroma (Pink arnebia).